Consider the following 146-residue polypeptide: MIVKKKVQSCIKLQIEARSATPSPPIGPALGQQGINIMKFCKDFNTRTADFEMGLILPVVITVYVDRSFSFVIKTPTAVFLLKKAAGIKSGSEKPKCVSVGKVLISQIYEIAKIKLIDMTSLNLESASKSIMGTARSIGLEVEDNL.

This sequence belongs to the universal ribosomal protein uL11 family. In terms of assembly, part of the ribosomal stalk of the 50S ribosomal subunit. Interacts with L10 and the large rRNA to form the base of the stalk. L10 forms an elongated spine to which L12 dimers bind in a sequential fashion forming a multimeric L10(L12)X complex. Post-translationally, one or more lysine residues are methylated.

In terms of biological role, forms part of the ribosomal stalk which helps the ribosome interact with GTP-bound translation factors. This Blochmanniella floridana protein is Large ribosomal subunit protein uL11.